A 69-amino-acid polypeptide reads, in one-letter code: Small, acid-soluble spore protein I (69 aa).

It belongs to the SspI family.

The protein localises to the spore core. The polypeptide is Small, acid-soluble spore protein I (Bacillus mycoides (strain KBAB4) (Bacillus weihenstephanensis)).